Reading from the N-terminus, the 121-residue chain is Small ribosomal subunit protein uS13 (121 aa).

The interval 94 to 121 (GLPVRGQNTKNNARTRKGPRRTVANKKK) is disordered. A compositionally biased stretch (basic residues) spans 106–121 (ARTRKGPRRTVANKKK).

Belongs to the universal ribosomal protein uS13 family. Part of the 30S ribosomal subunit. Forms a loose heterodimer with protein S19. Forms two bridges to the 50S subunit in the 70S ribosome.

Located at the top of the head of the 30S subunit, it contacts several helices of the 16S rRNA. In the 70S ribosome it contacts the 23S rRNA (bridge B1a) and protein L5 of the 50S subunit (bridge B1b), connecting the 2 subunits; these bridges are implicated in subunit movement. Contacts the tRNAs in the A and P-sites. The protein is Small ribosomal subunit protein uS13 of Geobacillus sp. (strain WCH70).